A 252-amino-acid chain; its full sequence is 3-dehydroquinate dehydratase (252 aa).

Residues serine 21, glutamate 46 to arginine 48, and arginine 82 contribute to the 3-dehydroquinate site. Histidine 143 acts as the Proton donor/acceptor in catalysis. Lysine 170 serves as the catalytic Schiff-base intermediate with substrate. Residues arginine 213, serine 232, and glutamine 236 each contribute to the 3-dehydroquinate site.

Belongs to the type-I 3-dehydroquinase family. In terms of assembly, homodimer.

The enzyme catalyses 3-dehydroquinate = 3-dehydroshikimate + H2O. The protein operates within metabolic intermediate biosynthesis; chorismate biosynthesis; chorismate from D-erythrose 4-phosphate and phosphoenolpyruvate: step 3/7. In terms of biological role, involved in the third step of the chorismate pathway, which leads to the biosynthesis of aromatic amino acids. Catalyzes the cis-dehydration of 3-dehydroquinate (DHQ) and introduces the first double bond of the aromatic ring to yield 3-dehydroshikimate. The sequence is that of 3-dehydroquinate dehydratase from Escherichia coli O7:K1 (strain IAI39 / ExPEC).